Reading from the N-terminus, the 183-residue chain is Ribosome rescue factor SmrB (183 aa).

The 76-residue stretch at L98–E173 folds into the Smr domain.

This sequence belongs to the SmrB family. As to quaternary structure, associates with collided ribosomes, but not with correctly translating polysomes.

Functionally, acts as a ribosome collision sensor. Detects stalled/collided disomes (pairs of ribosomes where the leading ribosome is stalled and a second ribosome has collided with it) and endonucleolytically cleaves mRNA at the 5' boundary of the stalled ribosome. Stalled/collided disomes form a new interface (primarily via the 30S subunits) that binds SmrB. Cleaved mRNA becomes available for tmRNA ligation, leading to ribosomal subunit dissociation and rescue of stalled ribosomes. In Salmonella paratyphi A (strain ATCC 9150 / SARB42), this protein is Ribosome rescue factor SmrB.